We begin with the raw amino-acid sequence, 245 residues long: Ribonuclease 3 (245 aa).

Positions 19 to 148 (FKVFQEKIGI…FIGALYLDQG (130 aa)) constitute an RNase III domain. E61 is a binding site for Mg(2+). D65 is a catalytic residue. D134 and E137 together coordinate Mg(2+). E137 is an active-site residue. In terms of domain architecture, DRBM spans 174–243 (DYKSQLQELI…AAEALKKLKE (70 aa)).

It belongs to the ribonuclease III family. Homodimer. It depends on Mg(2+) as a cofactor.

It is found in the cytoplasm. It catalyses the reaction Endonucleolytic cleavage to 5'-phosphomonoester.. Digests double-stranded RNA. Involved in the processing of primary rRNA transcript to yield the immediate precursors to the large and small rRNAs (23S and 16S). Processes some mRNAs, and tRNAs when they are encoded in the rRNA operon. Processes pre-crRNA and tracrRNA of type II CRISPR loci if present in the organism. The protein is Ribonuclease 3 of Bacillus cereus (strain ZK / E33L).